A 606-amino-acid polypeptide reads, in one-letter code: Putative mitochondrial ATP-dependent helicase irc3 (606 aa).

The Helicase ATP-binding domain occupies 40-201 (NAFDEGKRRI…ACGLDEIVYH (162 aa)). ATP is bound at residue 53–60 (LATGSGKT). Residues 148-151 (DEVH) carry the DEAH box motif. The Helicase C-terminal domain occupies 246-398 (QSEKAIFEIP…LSPDEVENFY (153 aa)).

Belongs to the helicase family. IRC3 subfamily.

It localises to the mitochondrion. This Schizosaccharomyces pombe (strain 972 / ATCC 24843) (Fission yeast) protein is Putative mitochondrial ATP-dependent helicase irc3 (irc3).